A 308-amino-acid chain; its full sequence is MLSVVEGIFIFVVISESVFGVLGNGFIGLVNCIDCAKNKLSTIGFILTGLAISRIFLIWVIITDGFIQIFSPDIYASGNLIEYISYIWVIGNQSSMWFATSLSIFYFLKIANFSNYIFLWLKSRTNMVLPFMMAFLLISSLLNFAHIVKILNDHKMKNDTVWHLNMYKSEYFIKQILLNLGVIFFFTLSLITCVLLIISLWRHNRQMQSNVTGLRDSNTEAHVKAMKVLISFIILFILYFIGMALEISRFTVPENKLLLMFGMTTTAIYPWGHSFILILGNSKLKQASLRVLQQLKCCEKRKKSQSHI.

The Extracellular portion of the chain corresponds to 1–6; the sequence is MLSVVE. The helical transmembrane segment at 7–27 threads the bilayer; it reads GIFIFVVISESVFGVLGNGFI. Over 28-42 the chain is Cytoplasmic; sequence GLVNCIDCAKNKLST. A helical membrane pass occupies residues 43–63; that stretch reads IGFILTGLAISRIFLIWVIIT. Residues 64–100 lie on the Extracellular side of the membrane; it reads DGFIQIFSPDIYASGNLIEYISYIWVIGNQSSMWFAT. N-linked (GlcNAc...) asparagine glycosylation occurs at Asn-92. A helical membrane pass occupies residues 101–121; sequence SLSIFYFLKIANFSNYIFLWL. Topologically, residues 122–126 are cytoplasmic; the sequence is KSRTN. The helical transmembrane segment at 127 to 147 threads the bilayer; sequence MVLPFMMAFLLISSLLNFAHI. The Extracellular portion of the chain corresponds to 148–179; that stretch reads VKILNDHKMKNDTVWHLNMYKSEYFIKQILLN. Asn-158 is a glycosylation site (N-linked (GlcNAc...) asparagine). Residues 180–200 traverse the membrane as a helical segment; the sequence is LGVIFFFTLSLITCVLLIISL. Residues 201–227 lie on the Cytoplasmic side of the membrane; the sequence is WRHNRQMQSNVTGLRDSNTEAHVKAMK. Residues 228-248 form a helical membrane-spanning segment; that stretch reads VLISFIILFILYFIGMALEIS. Residues 249-257 lie on the Extracellular side of the membrane; that stretch reads RFTVPENKL. A helical membrane pass occupies residues 258–278; it reads LLMFGMTTTAIYPWGHSFILI. Residues 279 to 308 are Cytoplasmic-facing; it reads LGNSKLKQASLRVLQQLKCCEKRKKSQSHI.

This sequence belongs to the G-protein coupled receptor T2R family.

It localises to the membrane. In terms of biological role, receptor that may play a role in the perception of bitterness and is gustducin-linked. May play a role in sensing the chemical composition of the gastrointestinal content. The activity of this receptor may stimulate alpha gustducin, mediate PLC-beta-2 activation and lead to the gating of TRPM5. The chain is Taste receptor type 2 member 10 (TAS2R10) from Pongo pygmaeus (Bornean orangutan).